Reading from the N-terminus, the 404-residue chain is Pectate lyase E (404 aa).

The first 41 residues, 1-41 (MNNSRMSSVSTQKTTGRSALGTKSALAAIIATTMMVSVASA), serve as a signal peptide directing secretion. Ca(2+) is bound by residues aspartate 182 and aspartate 225. Residue arginine 278 is part of the active site.

Belongs to the polysaccharide lyase 1 family. PLBC subfamily. Ca(2+) is required as a cofactor.

It is found in the secreted. It catalyses the reaction Eliminative cleavage of (1-&gt;4)-alpha-D-galacturonan to give oligosaccharides with 4-deoxy-alpha-D-galact-4-enuronosyl groups at their non-reducing ends.. It functions in the pathway glycan metabolism; pectin degradation; 2-dehydro-3-deoxy-D-gluconate from pectin: step 2/5. In terms of biological role, involved in maceration and soft-rotting of plant tissue. Pectate lyases have been implicated as pathogenicity factors which induce maceration or rotting of plant tissue. PelE is sufficient to induce these effects under laboratory conditions. This Dickeya dadantii (strain 3937) (Erwinia chrysanthemi (strain 3937)) protein is Pectate lyase E (pelE).